The following is an 87-amino-acid chain: Small ribosomal subunit protein uS15 (87 aa).

It belongs to the universal ribosomal protein uS15 family. Part of the 30S ribosomal subunit. Forms a bridge to the 50S subunit in the 70S ribosome, contacting the 23S rRNA.

Its function is as follows. One of the primary rRNA binding proteins, it binds directly to 16S rRNA where it helps nucleate assembly of the platform of the 30S subunit by binding and bridging several RNA helices of the 16S rRNA. Forms an intersubunit bridge (bridge B4) with the 23S rRNA of the 50S subunit in the ribosome. In Ruminiclostridium cellulolyticum (strain ATCC 35319 / DSM 5812 / JCM 6584 / H10) (Clostridium cellulolyticum), this protein is Small ribosomal subunit protein uS15.